We begin with the raw amino-acid sequence, 251 residues long: Adenosylcobinamide-GDP ribazoletransferase (251 aa).

A run of 6 helical transmembrane segments spans residues 29–49 (FAGM…ILAV), 65–85 (SLLI…DGAM), 110–130 (AFGA…LCYL), 136–156 (LLIL…IVRY), 175–195 (AIDL…IARF), and 198–218 (LTVA…TGAW).

The protein belongs to the CobS family. Mg(2+) is required as a cofactor.

Its subcellular location is the cell inner membrane. The catalysed reaction is alpha-ribazole + adenosylcob(III)inamide-GDP = adenosylcob(III)alamin + GMP + H(+). It carries out the reaction alpha-ribazole 5'-phosphate + adenosylcob(III)inamide-GDP = adenosylcob(III)alamin 5'-phosphate + GMP + H(+). It functions in the pathway cofactor biosynthesis; adenosylcobalamin biosynthesis; adenosylcobalamin from cob(II)yrinate a,c-diamide: step 7/7. Joins adenosylcobinamide-GDP and alpha-ribazole to generate adenosylcobalamin (Ado-cobalamin). Also synthesizes adenosylcobalamin 5'-phosphate from adenosylcobinamide-GDP and alpha-ribazole 5'-phosphate. The protein is Adenosylcobinamide-GDP ribazoletransferase of Synechococcus elongatus (strain ATCC 33912 / PCC 7942 / FACHB-805) (Anacystis nidulans R2).